A 219-amino-acid chain; its full sequence is Protein-L-isoaspartate O-methyltransferase (219 aa).

Serine 64 is a catalytic residue.

The protein belongs to the methyltransferase superfamily. L-isoaspartyl/D-aspartyl protein methyltransferase family.

The protein resides in the cytoplasm. It catalyses the reaction [protein]-L-isoaspartate + S-adenosyl-L-methionine = [protein]-L-isoaspartate alpha-methyl ester + S-adenosyl-L-homocysteine. Catalyzes the methyl esterification of L-isoaspartyl residues in peptides and proteins that result from spontaneous decomposition of normal L-aspartyl and L-asparaginyl residues. It plays a role in the repair and/or degradation of damaged proteins. The sequence is that of Protein-L-isoaspartate O-methyltransferase from Chlorobaculum parvum (strain DSM 263 / NCIMB 8327) (Chlorobium vibrioforme subsp. thiosulfatophilum).